Reading from the N-terminus, the 270-residue chain is Indole-3-glycerol phosphate synthase (270 aa).

This sequence belongs to the TrpC family.

It carries out the reaction 1-(2-carboxyphenylamino)-1-deoxy-D-ribulose 5-phosphate + H(+) = (1S,2R)-1-C-(indol-3-yl)glycerol 3-phosphate + CO2 + H2O. Its pathway is amino-acid biosynthesis; L-tryptophan biosynthesis; L-tryptophan from chorismate: step 4/5. The chain is Indole-3-glycerol phosphate synthase from Salinibacter ruber (strain DSM 13855 / M31).